We begin with the raw amino-acid sequence, 521 residues long: Zinc finger and BTB domain-containing protein 18 (521 aa).

A BTB domain is found at 24 to 91 (CDCTVLVGDA…MYEGKLQFKD (68 aa)). Positions 190 to 230 (DSASIPQTGGEAETHTAAAGKTADSPCSSTGSLSHRSATSM) are disordered. The segment covering 197 to 212 (TGGEAETHTAAAGKTA) has biased composition (low complexity). The segment covering 214–230 (SPCSSTGSLSHRSATSM) has biased composition (polar residues). C2H2-type zinc fingers lie at residues 369–391 (FMCP…LSTH), 409–431 (PTCS…ERTH), 437–459 (FTCT…AVVH), and 465–488 (HACK…RKFH).

Belongs to the krueppel C2H2-type zinc-finger protein family. ZBTB18 subfamily.

Its subcellular location is the nucleus. In terms of biological role, transcriptional repressor that plays a role in various developmental processes. Specifically binds the consensus DNA sequence 5'-[AC]ACATCTG[GT][AC]-3' which contains the E box core, and acts by recruiting chromatin remodeling multiprotein complexes. The polypeptide is Zinc finger and BTB domain-containing protein 18 (zbtb18) (Xenopus tropicalis (Western clawed frog)).